The primary structure comprises 139 residues: Large ribosomal subunit protein uL22 (139 aa).

The disordered stretch occupies residues 1–21; that stretch reads MTAPTPEFRNKKQRKQQVKLR.

Belongs to the universal ribosomal protein uL22 family. As to quaternary structure, part of the 50S ribosomal subunit.

Its function is as follows. This protein binds specifically to 23S rRNA; its binding is stimulated by other ribosomal proteins, e.g. L4, L17, and L20. It is important during the early stages of 50S assembly. It makes multiple contacts with different domains of the 23S rRNA in the assembled 50S subunit and ribosome. Functionally, the globular domain of the protein is located near the polypeptide exit tunnel on the outside of the subunit, while an extended beta-hairpin is found that lines the wall of the exit tunnel in the center of the 70S ribosome. The sequence is that of Large ribosomal subunit protein uL22 from Deinococcus deserti (strain DSM 17065 / CIP 109153 / LMG 22923 / VCD115).